A 450-amino-acid chain; its full sequence is UDP-N-acetylmuramoylalanine--D-glutamate ligase (450 aa).

Position 119–125 (119–125) interacts with ATP; sequence GTNGKTT.

This sequence belongs to the MurCDEF family.

The protein resides in the cytoplasm. The enzyme catalyses UDP-N-acetyl-alpha-D-muramoyl-L-alanine + D-glutamate + ATP = UDP-N-acetyl-alpha-D-muramoyl-L-alanyl-D-glutamate + ADP + phosphate + H(+). Its pathway is cell wall biogenesis; peptidoglycan biosynthesis. Cell wall formation. Catalyzes the addition of glutamate to the nucleotide precursor UDP-N-acetylmuramoyl-L-alanine (UMA). The protein is UDP-N-acetylmuramoylalanine--D-glutamate ligase of Lactococcus lactis subsp. lactis (strain IL1403) (Streptococcus lactis).